The following is a 278-amino-acid chain: Cell division protein FtsQ (278 aa).

Topologically, residues 1–6 are cytoplasmic; that stretch reads MNATLR. Residues 7–27 form a helical membrane-spanning segment; it reads ILAWLIAVALVALPVVAVLNG. At 28 to 278 the chain is on the periplasmic side; that stretch reads WVGAERWPLA…SPFAIPGFKT (251 aa). A POTRA domain is found at 34–103; sequence WPLARLRVSG…DVLEVHVVEH (70 aa).

This sequence belongs to the FtsQ/DivIB family. FtsQ subfamily. In terms of assembly, part of a complex composed of FtsB, FtsL and FtsQ.

The protein resides in the cell inner membrane. In terms of biological role, essential cell division protein. May link together the upstream cell division proteins, which are predominantly cytoplasmic, with the downstream cell division proteins, which are predominantly periplasmic. May control correct divisome assembly. This chain is Cell division protein FtsQ, found in Xanthomonas campestris pv. campestris (strain ATCC 33913 / DSM 3586 / NCPPB 528 / LMG 568 / P 25).